The sequence spans 233 residues: Lipoprotein-releasing system ATP-binding protein LolD (233 aa).

The ABC transporter domain occupies leucine 6–glutamate 233. Glycine 42–serine 49 serves as a coordination point for ATP.

The protein belongs to the ABC transporter superfamily. Lipoprotein translocase (TC 3.A.1.125) family. As to quaternary structure, the complex is composed of two ATP-binding proteins (LolD) and two transmembrane proteins (LolC and LolE).

It localises to the cell inner membrane. Its function is as follows. Part of the ABC transporter complex LolCDE involved in the translocation of mature outer membrane-directed lipoproteins, from the inner membrane to the periplasmic chaperone, LolA. Responsible for the formation of the LolA-lipoprotein complex in an ATP-dependent manner. The sequence is that of Lipoprotein-releasing system ATP-binding protein LolD from Salmonella choleraesuis (strain SC-B67).